The following is an 872-amino-acid chain: Paramyosin (872 aa).

The tract at residues 1-31 is nonhelical region; sequence MSLYRSPSAALLKSPSQAAFGAPFGSMSVAD. Residues 32–851 adopt a coiled-coil conformation; that stretch reads LGSLTRLEDK…ESSLHLIRAK (820 aa). The interval 294 to 376 is interaction with unc-89; it reads EITQWKSKFD…ALLERAREQL (83 aa). The segment at 856-866 is nonhelical region; the sequence is VVTGKSSSKIF.

Belongs to the paramyosin family. As to quaternary structure, homodimer. May interact with unc-89 (via SH3 domain). In terms of processing, phosphorylated on serine residues in the N-terminal non-helical region. In terms of tissue distribution, expressed in body wall muscles of larvae and adults (at protein level). Expressed in gonadal myoepithelial sheath cells (at protein level).

The protein localises to the cytoplasm. It is found in the myofibril. Its subcellular location is the sarcomere. It localises to the a band. In terms of biological role, structural component of the muscle thick filaments which is involved in assembly and organization of sarcomere myofilaments. Involved in ovulation. Plays a role in the formation of muscle connections, also called muscle arm extensions, between the body wall and the motor axons in the dorsal and ventral cord. The sequence is that of Paramyosin (unc-15) from Caenorhabditis elegans.